The sequence spans 75 residues: Tautomerase PptA (75 aa).

Catalysis depends on proline 2, which acts as the Proton acceptor; via imino nitrogen.

This sequence belongs to the 4-oxalocrotonate tautomerase family. PptA subfamily. Homodimer.

Its subcellular location is the cytoplasm. In Escherichia coli (strain SMS-3-5 / SECEC), this protein is Tautomerase PptA.